We begin with the raw amino-acid sequence, 159 residues long: Ribosome maturation factor RimP (159 aa).

This sequence belongs to the RimP family.

The protein localises to the cytoplasm. Its function is as follows. Required for maturation of 30S ribosomal subunits. This Streptococcus pneumoniae serotype 19F (strain G54) protein is Ribosome maturation factor RimP.